The following is a 390-amino-acid chain: GDSL esterase/lipase At1g28580 (390 aa).

The N-terminal stretch at 1–28 (MAYPGSPILMKLLVFIFLSTFVVTNVSS) is a signal peptide. Ser-44 (nucleophile) is an active-site residue. Residues Asn-140 and Asn-322 are each glycosylated (N-linked (GlcNAc...) asparagine). Catalysis depends on residues Asp-347 and His-350.

It belongs to the 'GDSL' lipolytic enzyme family.

The protein resides in the secreted. The chain is GDSL esterase/lipase At1g28580 from Arabidopsis thaliana (Mouse-ear cress).